Here is a 231-residue protein sequence, read N- to C-terminus: Glutathione-specific gamma-glutamylcyclotransferase (231 aa).

Residue 49–54 (IFGYGS) coordinates substrate. Glu-127 functions as the Proton acceptor in the catalytic mechanism.

Belongs to the gamma-glutamylcyclotransferase family. ChaC subfamily.

The catalysed reaction is glutathione = L-cysteinylglycine + 5-oxo-L-proline. In terms of biological role, catalyzes the cleavage of glutathione into 5-oxo-L-proline and a Cys-Gly dipeptide. Acts specifically on glutathione, but not on other gamma-glutamyl peptides. This is Glutathione-specific gamma-glutamylcyclotransferase from Escherichia coli (strain K12).